Reading from the N-terminus, the 675-residue chain is Alpha-1,4-glucan:maltose-1-phosphate maltosyltransferase (675 aa).

Residues Lys-256, Gln-316, and Asp-351 each coordinate alpha-maltose 1-phosphate. Asp-386 acts as the Nucleophile in catalysis. Asn-387 contacts alpha-maltose 1-phosphate. Glu-415 serves as the catalytic Proton donor. 525–526 is an alpha-maltose 1-phosphate binding site; the sequence is KY.

Belongs to the glycosyl hydrolase 13 family. GlgE subfamily. Homodimer.

It carries out the reaction alpha-maltose 1-phosphate + [(1-&gt;4)-alpha-D-glucosyl](n) = [(1-&gt;4)-alpha-D-glucosyl](n+2) + phosphate. Its function is as follows. Maltosyltransferase that uses maltose 1-phosphate (M1P) as the sugar donor to elongate linear or branched alpha-(1-&gt;4)-glucans. Is involved in a branched alpha-glucan biosynthetic pathway from trehalose, together with TreS, Mak and GlgB. The polypeptide is Alpha-1,4-glucan:maltose-1-phosphate maltosyltransferase (Corynebacterium glutamicum (strain ATCC 13032 / DSM 20300 / JCM 1318 / BCRC 11384 / CCUG 27702 / LMG 3730 / NBRC 12168 / NCIMB 10025 / NRRL B-2784 / 534)).